A 455-amino-acid polypeptide reads, in one-letter code: Chromosomal replication initiator protein DnaA (455 aa).

The tract at residues M1–D77 is domain I, interacts with DnaA modulators. Positions D77–S116 are domain II. The domain III, AAA+ region stretch occupies residues G117–A333. The ATP site is built by G161, G163, K164, and T165. A domain IV, binds dsDNA region spans residues R334 to F455.

This sequence belongs to the DnaA family. In terms of assembly, oligomerizes as a right-handed, spiral filament on DNA at oriC.

Its subcellular location is the cytoplasm. Its function is as follows. Plays an essential role in the initiation and regulation of chromosomal replication. ATP-DnaA binds to the origin of replication (oriC) to initiate formation of the DNA replication initiation complex once per cell cycle. Binds the DnaA box (a 9 base pair repeat at the origin) and separates the double-stranded (ds)DNA. Forms a right-handed helical filament on oriC DNA; dsDNA binds to the exterior of the filament while single-stranded (ss)DNA is stabiized in the filament's interior. The ATP-DnaA-oriC complex binds and stabilizes one strand of the AT-rich DNA unwinding element (DUE), permitting loading of DNA polymerase. After initiation quickly degrades to an ADP-DnaA complex that is not apt for DNA replication. Binds acidic phospholipids. The chain is Chromosomal replication initiator protein DnaA from Lactococcus lactis subsp. lactis (strain IL1403) (Streptococcus lactis).